Reading from the N-terminus, the 117-residue chain is Large ribosomal subunit protein bL20 (117 aa).

Belongs to the bacterial ribosomal protein bL20 family.

In terms of biological role, binds directly to 23S ribosomal RNA and is necessary for the in vitro assembly process of the 50S ribosomal subunit. It is not involved in the protein synthesizing functions of that subunit. The chain is Large ribosomal subunit protein bL20 from Actinobacillus pleuropneumoniae serotype 7 (strain AP76).